A 337-amino-acid polypeptide reads, in one-letter code: UPF0284 protein AF_0276 (337 aa).

This sequence belongs to the UPF0284 family.

The chain is UPF0284 protein AF_0276 from Archaeoglobus fulgidus (strain ATCC 49558 / DSM 4304 / JCM 9628 / NBRC 100126 / VC-16).